Here is a 437-residue protein sequence, read N- to C-terminus: ATP-dependent RNA helicase RhlB (437 aa).

Positions 9-37 match the Q motif motif; it reads KKFADFPLHKEVQQALNEVGFEFCTPIQA. Residues 40–219 form the Helicase ATP-binding domain; it reads LPILLAKKDI…YDHMNEPEKV (180 aa). An ATP-binding site is contributed by 53-60; it reads AQTGTGKT. The DEAD box motif lies at 165–168; the sequence is DEAD. A Helicase C-terminal domain is found at 243-390; that stretch reads KMPLLLSLLE…VTSYDSEALL (148 aa). Positions 394 to 437 are disordered; that stretch reads PAPKRIHRKPSSHSRNSRDRSGSRPQGGHRGNAPRRHDKTRRHS. Over residues 425-437 the composition is skewed to basic residues; the sequence is NAPRRHDKTRRHS.

This sequence belongs to the DEAD box helicase family. RhlB subfamily. As to quaternary structure, component of the RNA degradosome, which is a multiprotein complex involved in RNA processing and mRNA degradation.

Its subcellular location is the cytoplasm. It catalyses the reaction ATP + H2O = ADP + phosphate + H(+). Its function is as follows. DEAD-box RNA helicase involved in RNA degradation. Has RNA-dependent ATPase activity and unwinds double-stranded RNA. This Shewanella piezotolerans (strain WP3 / JCM 13877) protein is ATP-dependent RNA helicase RhlB.